Reading from the N-terminus, the 209-residue chain is GTP cyclohydrolase-2 (209 aa).

Residue 49 to 53 (RIHSE) participates in GTP binding. The Zn(2+) site is built by Cys54, Cys65, and Cys67. GTP contacts are provided by residues Gln70, 92–94 (EGR), and Thr114. Asp126 serves as the catalytic Proton acceptor. Arg128 (nucleophile) is an active-site residue. GTP contacts are provided by Thr149 and Lys154.

Belongs to the GTP cyclohydrolase II family. Zn(2+) serves as cofactor.

The catalysed reaction is GTP + 4 H2O = 2,5-diamino-6-hydroxy-4-(5-phosphoribosylamino)-pyrimidine + formate + 2 phosphate + 3 H(+). It functions in the pathway cofactor biosynthesis; riboflavin biosynthesis; 5-amino-6-(D-ribitylamino)uracil from GTP: step 1/4. Catalyzes the conversion of GTP to 2,5-diamino-6-ribosylamino-4(3H)-pyrimidinone 5'-phosphate (DARP), formate and pyrophosphate. The protein is GTP cyclohydrolase-2 of Shewanella pealeana (strain ATCC 700345 / ANG-SQ1).